The following is a 207-amino-acid chain: 2,3-bisphosphoglycerate-dependent phosphoglycerate mutase (207 aa).

Residues 10–17, 23–24, R62, 89–92, K100, 116–117, and 160–161 contribute to the substrate site; these read RHGQSEWN, TG, ERDY, RR, and GN. Catalysis depends on H11, which acts as the Tele-phosphohistidine intermediate. E89 serves as the catalytic Proton donor/acceptor.

It belongs to the phosphoglycerate mutase family. BPG-dependent PGAM subfamily. In terms of assembly, homodimer.

The catalysed reaction is (2R)-2-phosphoglycerate = (2R)-3-phosphoglycerate. It participates in carbohydrate degradation; glycolysis; pyruvate from D-glyceraldehyde 3-phosphate: step 3/5. Its function is as follows. Catalyzes the interconversion of 2-phosphoglycerate and 3-phosphoglycerate. The chain is 2,3-bisphosphoglycerate-dependent phosphoglycerate mutase from Bradyrhizobium diazoefficiens (strain JCM 10833 / BCRC 13528 / IAM 13628 / NBRC 14792 / USDA 110).